Reading from the N-terminus, the 481-residue chain is MDDDLALQRAVALRSGLDDYELDDADLDLLEVDGEDADAIAFLPALPVLAIVGRPNVGKSALVNRILGRREAVVEDTPGVTRDRVSYRAEWNGRRFTVVDTGGWEPDARGIDASVAAQAEVAIDLADAVMFVVDAMVGATSTDEHVVRLLRKSDKPVFLAANKVDDARQEPSATELWSLGLGEPHPVSALHGRGVADLLDKILKALPDVSAVAKQEVGGPRRVAILGRPNVGKSSLLNKAAGEERVVVNELAGTTRDPVDEQVELGGRVWRFVDTAGIRRRVHLQQGADFYASLRTSTALEKAEVAVVVLDVSQPISEQDVRIIDLVLESGRALVLAFNKWDLLDDERRRYLEREIEQDLAHVSWAPRVNISARTGRHLEKLVPALERALESWETRIPTGKFNAFLAELTSAHPHPVRGGKQPRILFGTQSTSRPPTFVVFTTGFLDPGYRRYVIRRLREVYGFEGTPIVLNMRVREKRKH.

2 EngA-type G domains span residues 47–210 (PVLA…PDVS) and 221–394 (RRVA…ESWE). GTP is bound by residues 53–60 (GRPNVGKS), 100–104 (DTGGW), 162–165 (NKVD), 227–234 (GRPNVGKS), 274–278 (DTAGI), and 339–342 (NKWD). The KH-like domain occupies 395 to 477 (TRIPTGKFNA…PIVLNMRVRE (83 aa)).

Belongs to the TRAFAC class TrmE-Era-EngA-EngB-Septin-like GTPase superfamily. EngA (Der) GTPase family. Associates with the 50S ribosomal subunit.

Functionally, GTPase that plays an essential role in the late steps of ribosome biogenesis. The protein is GTPase Der of Leifsonia xyli subsp. xyli (strain CTCB07).